The chain runs to 273 residues: Putative phosphoenolpyruvate synthase regulatory protein (273 aa).

Position 153–160 (153–160 (AVSRAGKT)) interacts with ADP.

It belongs to the pyruvate, phosphate/water dikinase regulatory protein family. PSRP subfamily.

The catalysed reaction is [pyruvate, water dikinase] + ADP = [pyruvate, water dikinase]-phosphate + AMP + H(+). The enzyme catalyses [pyruvate, water dikinase]-phosphate + phosphate + H(+) = [pyruvate, water dikinase] + diphosphate. Functionally, bifunctional serine/threonine kinase and phosphorylase involved in the regulation of the phosphoenolpyruvate synthase (PEPS) by catalyzing its phosphorylation/dephosphorylation. The polypeptide is Putative phosphoenolpyruvate synthase regulatory protein (Xanthomonas oryzae pv. oryzae (strain MAFF 311018)).